The following is a 305-amino-acid chain: GMP synthase [glutamine-hydrolyzing] subunit B (305 aa).

Positions Val-2–Arg-184 constitute a GMPS ATP-PPase domain. Residue Ser-29–Ser-35 participates in ATP binding.

As to quaternary structure, heterodimer composed of a glutamine amidotransferase subunit (A) and a GMP-binding subunit (B).

The catalysed reaction is XMP + L-glutamine + ATP + H2O = GMP + L-glutamate + AMP + diphosphate + 2 H(+). The protein operates within purine metabolism; GMP biosynthesis; GMP from XMP (L-Gln route): step 1/1. Its function is as follows. Catalyzes the synthesis of GMP from XMP. This chain is GMP synthase [glutamine-hydrolyzing] subunit B, found in Methanosphaerula palustris (strain ATCC BAA-1556 / DSM 19958 / E1-9c).